A 428-amino-acid polypeptide reads, in one-letter code: Histidinol dehydrogenase (428 aa).

3 residues coordinate NAD(+): Tyr124, Gln186, and Asn209. Substrate contacts are provided by Ser233, Gln255, and His258. 2 residues coordinate Zn(2+): Gln255 and His258. Active-site proton acceptor residues include Glu322 and His323. His323, Asp356, Glu410, and His415 together coordinate substrate. Residue Asp356 coordinates Zn(2+). His415 serves as a coordination point for Zn(2+).

It belongs to the histidinol dehydrogenase family. Zn(2+) is required as a cofactor.

The enzyme catalyses L-histidinol + 2 NAD(+) + H2O = L-histidine + 2 NADH + 3 H(+). It functions in the pathway amino-acid biosynthesis; L-histidine biosynthesis; L-histidine from 5-phospho-alpha-D-ribose 1-diphosphate: step 9/9. In terms of biological role, catalyzes the sequential NAD-dependent oxidations of L-histidinol to L-histidinaldehyde and then to L-histidine. This chain is Histidinol dehydrogenase, found in Bacteroides fragilis (strain ATCC 25285 / DSM 2151 / CCUG 4856 / JCM 11019 / LMG 10263 / NCTC 9343 / Onslow / VPI 2553 / EN-2).